The following is a 302-amino-acid chain: Ornithine carbamoyltransferase (302 aa).

Carbamoyl phosphate is bound by residues 47–50 (STRT), Gln-74, Arg-98, and 125–128 (HPCQ). Residues Asn-156, Asp-220, and 224-225 (SM) each bind L-ornithine. Carbamoyl phosphate contacts are provided by residues 260–261 (CL) and Arg-288.

It belongs to the aspartate/ornithine carbamoyltransferase superfamily. OTCase family.

It is found in the cytoplasm. The enzyme catalyses carbamoyl phosphate + L-ornithine = L-citrulline + phosphate + H(+). It functions in the pathway amino-acid biosynthesis; L-arginine biosynthesis; L-arginine from L-ornithine and carbamoyl phosphate: step 1/3. Its function is as follows. Reversibly catalyzes the transfer of the carbamoyl group from carbamoyl phosphate (CP) to the N(epsilon) atom of ornithine (ORN) to produce L-citrulline. The sequence is that of Ornithine carbamoyltransferase from Methanosphaera stadtmanae (strain ATCC 43021 / DSM 3091 / JCM 11832 / MCB-3).